The primary structure comprises 354 residues: MTELKNDRYLRALLRQPVDVTPVWMMRQAGRYLPEYKATRAQAGDFMSLCKNAELACEVTLQPLRRYPLDAAILFSDILTVPDAMGLGLYFEAGEGPRFTAPVTCKADVDKLPIPDPEDELGYVMNAVRTIRRELKGEVPLIGFSGSPWTLATYMVEGGSSKAFTVIKKMMYADPQALHLLLDKLAKSVTLYLNAQIKAGAQSVMIFDTWGGVLTGRDYQQFSLYYMHKIVDGLLRENDGRRVPVTLFTKGGGQWLEAMAETGCDALGLDWTTDIADARRRVGHKVALQGNMDPSMLYAPPARIEDEVATILAGFGQGEGHVFNLGHGIHQDVPPEHAGAFVEAVHRLSAQYHN.

Residues 27 to 31 (RQAGR), aspartate 77, tyrosine 154, threonine 209, and histidine 327 contribute to the substrate site.

The protein belongs to the uroporphyrinogen decarboxylase family. Homodimer.

The protein resides in the cytoplasm. It carries out the reaction uroporphyrinogen III + 4 H(+) = coproporphyrinogen III + 4 CO2. Its pathway is porphyrin-containing compound metabolism; protoporphyrin-IX biosynthesis; coproporphyrinogen-III from 5-aminolevulinate: step 4/4. Catalyzes the decarboxylation of four acetate groups of uroporphyrinogen-III to yield coproporphyrinogen-III. This chain is Uroporphyrinogen decarboxylase, found in Salmonella newport (strain SL254).